The sequence spans 338 residues: 1-aminocyclopropane-1-carboxylate deaminase (338 aa).

An N6-(pyridoxal phosphate)lysine modification is found at K51. S78 (nucleophile) is an active-site residue.

This sequence belongs to the ACC deaminase/D-cysteine desulfhydrase family. Homotrimer. It depends on pyridoxal 5'-phosphate as a cofactor.

The catalysed reaction is 1-aminocyclopropane-1-carboxylate + H2O = 2-oxobutanoate + NH4(+). Its function is as follows. Catalyzes a cyclopropane ring-opening reaction, the irreversible conversion of 1-aminocyclopropane-1-carboxylate (ACC) to ammonia and alpha-ketobutyrate. Allows growth on ACC as a nitrogen source. In Burkholderia vietnamiensis (strain G4 / LMG 22486) (Burkholderia cepacia (strain R1808)), this protein is 1-aminocyclopropane-1-carboxylate deaminase.